A 1288-amino-acid chain; its full sequence is Symplekin (1288 aa).

An interaction with HSF1 region spans residues 1–124 (MASSSGDSVT…NMLLRDENVN (124 aa)). Residue serine 13 is modified to Phosphoserine. 5 HEAT repeats span residues 31-64 (TTSE…LIIN), 67-101 (PTLL…EACK), 104-146 (IELL…WMVK), 153-192 (LQEA…GLIV), and 227-266 (VLWE…IARQ). Residues 335–392 (IARNMPSSKDSRKRPRDDTDSTLKKMKLEPNLGEDDEDKDLEPGPSGTSKASAQISGQ) are disordered. Residues 345-360 (SRKRPRDDTDSTLKKM) carry the Nuclear localization signal motif. Residues 349-362 (PRDDTDSTLKKMKL) are compositionally biased toward basic and acidic residues. Lysine 361 participates in a covalent cross-link: Glycyl lysine isopeptide (Lys-Gly) (interchain with G-Cter in SUMO1); alternate. A Glycyl lysine isopeptide (Lys-Gly) (interchain with G-Cter in SUMO2); alternate cross-link involves residue lysine 361. Residues 380 to 392 (SGTSKASAQISGQ) show a composition bias toward polar residues. Lysine 483 participates in a covalent cross-link: Glycyl lysine isopeptide (Lys-Gly) (interchain with G-Cter in SUMO2). Serine 494 carries the phosphoserine modification. 2 disordered regions span residues 1130–1151 (PAPA…PPQD) and 1163–1288 (LKRQ…KGNS). Over residues 1131-1149 (APAPAPAPAPAPAPAPRPP) the composition is skewed to pro residues. The span at 1163-1173 (LKRQLEEEQKQ) shows a compositional bias: basic and acidic residues. Residues serine 1238 and serine 1239 each carry the phosphoserine modification. Lysine 1256 is covalently cross-linked (Glycyl lysine isopeptide (Lys-Gly) (interchain with G-Cter in SUMO1)). A Phosphoserine modification is found at serine 1260. Residues 1267-1288 (AVEEALKTSSPETREPESKGNS) are compositionally biased toward basic and acidic residues. At threonine 1274 the chain carries Phosphothreonine. Position 1276 is a phosphoserine (serine 1276).

It belongs to the Symplekin family. Found in a heat-sensitive complex at least composed of several cleavage and polyadenylation specific and cleavage stimulation factors. Interacts with CPSF2, CPSF3 and CSTF2. Interacts (via N-terminus) with HSF1; this interaction is direct and occurs upon heat shock. Interacts with SSU72.

The protein resides in the cytoplasm. Its subcellular location is the cytoskeleton. It localises to the cell junction. The protein localises to the tight junction. It is found in the cell membrane. The protein resides in the nucleus. Its subcellular location is the nucleoplasm. Functionally, scaffold protein that functions as a component of a multimolecular complex involved in histone mRNA 3'-end processing. Specific component of the tight junction (TJ) plaque, but might not be an exclusively junctional component. May have a house-keeping rule. Is involved in pre-mRNA polyadenylation. Enhances SSU72 phosphatase activity. This chain is Symplekin (Sympk), found in Mus musculus (Mouse).